Reading from the N-terminus, the 134-residue chain is Phosphoribosyl-AMP cyclohydrolase (134 aa).

A Mg(2+)-binding site is contributed by Asp77. Cys78 contacts Zn(2+). Positions 79 and 81 each coordinate Mg(2+). Cys95 and Cys102 together coordinate Zn(2+).

Belongs to the PRA-CH family. In terms of assembly, homodimer. It depends on Mg(2+) as a cofactor. The cofactor is Zn(2+).

The protein resides in the cytoplasm. It carries out the reaction 1-(5-phospho-beta-D-ribosyl)-5'-AMP + H2O = 1-(5-phospho-beta-D-ribosyl)-5-[(5-phospho-beta-D-ribosylamino)methylideneamino]imidazole-4-carboxamide. Its pathway is amino-acid biosynthesis; L-histidine biosynthesis; L-histidine from 5-phospho-alpha-D-ribose 1-diphosphate: step 3/9. Catalyzes the hydrolysis of the adenine ring of phosphoribosyl-AMP. The chain is Phosphoribosyl-AMP cyclohydrolase from Pseudomonas aeruginosa (strain LESB58).